We begin with the raw amino-acid sequence, 404 residues long: 4-hydroxy-3-methylbut-2-enyl diphosphate reductase (404 aa).

Cysteine 66 provides a ligand contact to [4Fe-4S] cluster. Position 96 (histidine 96) interacts with (2E)-4-hydroxy-3-methylbut-2-enyl diphosphate. Position 96 (histidine 96) interacts with dimethylallyl diphosphate. Position 96 (histidine 96) interacts with isopentenyl diphosphate. [4Fe-4S] cluster is bound at residue cysteine 157. Position 185 (histidine 185) interacts with (2E)-4-hydroxy-3-methylbut-2-enyl diphosphate. Histidine 185 lines the dimethylallyl diphosphate pocket. Histidine 185 provides a ligand contact to isopentenyl diphosphate. Glutamate 187 acts as the Proton donor in catalysis. Threonine 250 serves as a coordination point for (2E)-4-hydroxy-3-methylbut-2-enyl diphosphate. Residue cysteine 288 participates in [4Fe-4S] cluster binding. 4 residues coordinate (2E)-4-hydroxy-3-methylbut-2-enyl diphosphate: serine 317, serine 318, asparagine 319, and serine 380. The dimethylallyl diphosphate site is built by serine 317, serine 318, asparagine 319, and serine 380. 4 residues coordinate isopentenyl diphosphate: serine 317, serine 318, asparagine 319, and serine 380.

The protein belongs to the IspH family. The cofactor is [4Fe-4S] cluster.

The enzyme catalyses isopentenyl diphosphate + 2 oxidized [2Fe-2S]-[ferredoxin] + H2O = (2E)-4-hydroxy-3-methylbut-2-enyl diphosphate + 2 reduced [2Fe-2S]-[ferredoxin] + 2 H(+). It carries out the reaction dimethylallyl diphosphate + 2 oxidized [2Fe-2S]-[ferredoxin] + H2O = (2E)-4-hydroxy-3-methylbut-2-enyl diphosphate + 2 reduced [2Fe-2S]-[ferredoxin] + 2 H(+). It participates in isoprenoid biosynthesis; dimethylallyl diphosphate biosynthesis; dimethylallyl diphosphate from (2E)-4-hydroxy-3-methylbutenyl diphosphate: step 1/1. It functions in the pathway isoprenoid biosynthesis; isopentenyl diphosphate biosynthesis via DXP pathway; isopentenyl diphosphate from 1-deoxy-D-xylulose 5-phosphate: step 6/6. Catalyzes the conversion of 1-hydroxy-2-methyl-2-(E)-butenyl 4-diphosphate (HMBPP) into a mixture of isopentenyl diphosphate (IPP) and dimethylallyl diphosphate (DMAPP). Acts in the terminal step of the DOXP/MEP pathway for isoprenoid precursor biosynthesis. This Prochlorococcus marinus (strain MIT 9211) protein is 4-hydroxy-3-methylbut-2-enyl diphosphate reductase.